The chain runs to 339 residues: ADP-L-glycero-D-manno-heptose-6-epimerase (339 aa).

NADP(+) contacts are provided by residues 11–12 (FI), 32–33 (DD), Lys39, Lys54, 75–79 (EGACS), and Asn92. Tyr139 acts as the Proton acceptor in catalysis. Residue Lys143 participates in NADP(+) binding. Position 170 (Asn170) interacts with substrate. Positions 171 and 179 each coordinate NADP(+). Lys179 acts as the Proton acceptor in catalysis. Substrate-binding positions include Arg181, His188, 202 to 205 (FGEY), Arg215, and Tyr294.

Belongs to the NAD(P)-dependent epimerase/dehydratase family. HldD subfamily. As to quaternary structure, homopentamer. The cofactor is NADP(+).

It catalyses the reaction ADP-D-glycero-beta-D-manno-heptose = ADP-L-glycero-beta-D-manno-heptose. Its pathway is nucleotide-sugar biosynthesis; ADP-L-glycero-beta-D-manno-heptose biosynthesis; ADP-L-glycero-beta-D-manno-heptose from D-glycero-beta-D-manno-heptose 7-phosphate: step 4/4. Catalyzes the interconversion between ADP-D-glycero-beta-D-manno-heptose and ADP-L-glycero-beta-D-manno-heptose via an epimerization at carbon 6 of the heptose. This is ADP-L-glycero-D-manno-heptose-6-epimerase from Polynucleobacter necessarius subsp. necessarius (strain STIR1).